The sequence spans 96 residues: Large ribosomal subunit protein bL28 (96 aa).

The interval 1–22 (MSRRCELTGKGPMTGNNVSHAN) is disordered.

The protein belongs to the bacterial ribosomal protein bL28 family.

The polypeptide is Large ribosomal subunit protein bL28 (Ruegeria sp. (strain TM1040) (Silicibacter sp.)).